The sequence spans 376 residues: Arsenite methyltransferase (376 aa).

Ser-47 and Ser-336 each carry phosphoserine. Residues 354–363 (SDKMKPRHAP) are compositionally biased toward basic and acidic residues. Positions 354–376 (SDKMKPRHAPEGTGGCCGKRKNC) are disordered.

Belongs to the methyltransferase superfamily. Arsenite methyltransferase family.

It is found in the cytoplasm. Its subcellular location is the cytosol. The catalysed reaction is arsenic triglutathione + [thioredoxin]-dithiol + S-adenosyl-L-methionine + 2 H2O = methylarsonous acid + [thioredoxin]-disulfide + 3 glutathione + S-adenosyl-L-homocysteine + H(+). It carries out the reaction arsenic triglutathione + 2 [thioredoxin]-dithiol + 2 S-adenosyl-L-methionine + H2O = dimethylarsinous acid + 2 [thioredoxin]-disulfide + 3 glutathione + 2 S-adenosyl-L-homocysteine + 2 H(+). The enzyme catalyses arsenic triglutathione + 3 [thioredoxin]-dithiol + 3 S-adenosyl-L-methionine = trimethylarsine + 3 [thioredoxin]-disulfide + 3 glutathione + 3 S-adenosyl-L-homocysteine + 3 H(+). In terms of biological role, catalyzes the transfer of a methyl group from AdoMet to trivalent arsenicals producing methylated and dimethylated arsenicals. It methylates arsenite to form methylarsonate, Me-AsO(3)H(2), which is reduced by methylarsonate reductase to methylarsonite, Me-As(OH)2. Methylarsonite is also a substrate and it is converted into the much less toxic compound dimethylarsinate (cacodylate), Me(2)As(O)-OH. The polypeptide is Arsenite methyltransferase (As3mt) (Mus musculus (Mouse)).